We begin with the raw amino-acid sequence, 482 residues long: Bile acid receptor (482 aa).

Lys-132 participates in a covalent cross-link: Glycyl lysine isopeptide (Lys-Gly) (interchain with G-Cter in SUMO1). Positions 134 to 209 form a DNA-binding region, nuclear receptor; sequence DELCVVCGDR…MGMLAECLLT (76 aa). The segment at 137–157 adopts an NR C4-type zinc-finger fold; sequence CVVCGDRASGYHYNALTCEGC. Ser-145 and Ser-164 each carry phosphoserine; by PKC/PRKCA. Lys-167 carries the N6-acetyllysine; by EP300 modification. Residues 173 to 197 form an NR C4-type zinc finger; that stretch reads CKNGGNCVMDMYMRRKCQECRLRKC. Lys-216 is subject to N6-methyllysine; by SETD7. Lys-223 carries the N6-acetyllysine; by EP300 modification. Over residues 229–240 the composition is skewed to basic and acidic residues; that stretch reads AIHEDSEGRDLR. The disordered stretch occupies residues 229–253; the sequence is AIHEDSEGRDLRQVTSTTKSCREKT. The region spanning 258–482 is the NR LBD domain; sequence DQQNLLHYIM…PLLCEIWDVQ (225 aa). Lys-285 is covalently cross-linked (Glycyl lysine isopeptide (Lys-Gly) (interchain with G-Cter in SUMO1)). Chenodeoxycholate is bound by residues Arg-341, Tyr-371, and Tyr-379. A Phosphothreonine; by PKC/PRKCZ modification is found at Thr-452. A chenodeoxycholate-binding site is contributed by His-457.

It belongs to the nuclear hormone receptor family. NR1 subfamily. Heterodimer with RXRA; the heterodimerization enhances the binding affinity for LXXLL motifs from coactivators. Binds DNA predominantly as a heterodimer with RXRA. After activation by agonist binding interacts with coactivators. Interacts with NCOA1, NCOA2, PPARGC1A, CARM1, SETD7, PRMT1, GPS2, SMARCA4 and MED1, EP300 and SMARCD1. Interacts with XRCC5 and XRCC6; decreasing NR1H4/FXR transactivation activity towards ABCB11/BSEP. Interacts with PAGR1 AND NCOA6; indicative for an association with an MLL2/MLL3 complex (ASCOM). Post-translationally, acetylated by EP300. Lys-223 as is the major acetylation site for EP300; the dynamicly regulated acetylation inhibits heterodimerization with RXRA and transactivation activity. Deacetylated by SIRT1. In terms of processing, methylation may increase transactivation of target genes. Phosphorylation by PKC/PRKCA increases transactivation activity by promoting association with PPARGC1A. Post-translationally, sumoylated upon ligand binding.

It localises to the nucleus. Ligand-activated transcription factor. Receptor for bile acids (BAs) such as chenodeoxycholic acid (CDCA), lithocholic acid, deoxycholic acid (DCA) and allocholic acid (ACA). Plays a essential role in BA homeostasis through the regulation of genes involved in BA synthesis, conjugation and enterohepatic circulation. Also regulates lipid and glucose homeostasis and is involved innate immune response. The FXR-RXR heterodimer binds predominantly to farnesoid X receptor response elements (FXREs) containing two inverted repeats of the consensus sequence 5'-AGGTCA-3' in which the monomers are spaced by 1 nucleotide (IR-1) but also to tandem repeat DR1 sites with lower affinity, and can be activated by either FXR or RXR-specific ligands. It is proposed that monomeric nuclear receptors such as NR5A2/LRH-1 bound to coregulatory nuclear responsive element (NRE) halfsites located in close proximity to FXREs modulate transcriptional activity. In the liver activates transcription of the corepressor NR0B2 thereby indirectly inhibiting CYP7A1 and CYP8B1 (involved in BA synthesis) implicating at least in part histone demethylase KDM1A resulting in epigenomic repression, and SLC10A1/NTCP (involved in hepatic uptake of conjugated BAs). Activates transcription of the repressor MAFG (involved in regulation of BA synthesis). Activates transcription of SLC27A5/BACS and BAAT (involved in BA conjugation), ABCB11/BSEP (involved in bile salt export) by directly recruiting histone methyltransferase CARM1, and ABCC2/MRP2 (involved in secretion of conjugated BAs) and ABCB4 (involved in secretion of phosphatidylcholine in the small intestine). Activates transcription of SLC27A5/BACS and BAAT (involved in BA conjugation), ABCB11/BSEP (involved in bile salt export) by directly recruiting histone methyltransferase CARM1, and ABCC2/MRP2 (involved in secretion of conjugated BAs) and ABCB4 (involved in secretion of phosphatidylcholine in the small intestine). In the intestine activates FGF19 expression and secretion leading to hepatic CYP7A1 repression. The function also involves the coordinated induction of hepatic KLB/beta-klotho expression. Regulates transcription of liver UGT2B4 and SULT2A1 involved in BA detoxification; binding to the UGT2B4 promoter seems to imply a monomeric transactivation independent of RXRA. Modulates lipid homeostasis by activating liver NR0B2/SHP-mediated repression of SREBF1 (involved in de novo lipogenesis), expression of PLTP (involved in HDL formation), SCARB1 (involved in HDL hepatic uptake), APOE, APOC1, APOC4, PPARA (involved in beta-oxidation of fatty acids), VLDLR and SDC1 (involved in the hepatic uptake of LDL and IDL remnants), and inhibiting expression of MTTP (involved in VLDL assembly). Increases expression of APOC2 (promoting lipoprotein lipase activity implicated in triglyceride clearance). Transrepresses APOA1 involving a monomeric competition with NR2A1 for binding to a DR1 element. Also reduces triglyceride clearance by inhibiting expression of ANGPTL3 and APOC3 (both involved in inhibition of lipoprotein lipase). Involved in glucose homeostasis by modulating hepatic gluconeogenesis through activation of NR0B2/SHP-mediated repression of respective genes. Modulates glycogen synthesis (inducing phosphorylation of glycogen synthase kinase-3). Modulates glucose-stimulated insulin secretion and is involved in insulin resistance. Involved in intestinal innate immunity. Plays a role in protecting the distal small intestine against bacterial overgrowth and preservation of the epithelial barrier. Down-regulates inflammatory cytokine expression in several types of immune cells including macrophages and mononuclear cells. Mediates trans-repression of TLR4-induced cytokine expression; the function seems to require its sumoylation and prevents N-CoR nuclear receptor corepressor clearance from target genes such as IL1B and NOS2. Involved in the TLR9-mediated protective mechanism in intestinal inflammation. Plays an anti-inflammatory role in liver inflammation; proposed to inhibit pro-inflammatory (but not antiapoptotic) NF-kappa-B signaling. This chain is Bile acid receptor (NR1H4), found in Bos taurus (Bovine).